Here is a 376-residue protein sequence, read N- to C-terminus: Deoxyguanosinetriphosphate triphosphohydrolase-like protein (376 aa).

A disordered region spans residues 1-32; the sequence is MEPSFAPYAAHSSQTRGRVHREAPAAPRSEFQ. The region spanning 65-196 is the HD domain; that stretch reads RLTHSIEVAQ…ANLADEIAYN (132 aa).

It belongs to the dGTPase family. Type 2 subfamily.

The sequence is that of Deoxyguanosinetriphosphate triphosphohydrolase-like protein from Thiobacillus denitrificans (strain ATCC 25259 / T1).